Consider the following 323-residue polypeptide: Peridinin-chlorophyll a-binding protein 3 (323 aa).

2 consecutive repeat copies span residues 1 to 173 and 174 to 323.

Homotrimer.

The protein localises to the plastid. It is found in the chloroplast. Water-soluble antenna for capture of solar energy in the blue-green range. Peridinin is an asymmetric carotenoid. In Amphidinium carterae (Dinoflagellate), this protein is Peridinin-chlorophyll a-binding protein 3.